A 177-amino-acid polypeptide reads, in one-letter code: Ribosome maturation factor RimM (177 aa).

Residues 98–171 form the PRC barrel domain; it reads GETIFLSEIK…AVVMDLPEGL (74 aa).

It belongs to the RimM family. As to quaternary structure, binds ribosomal protein uS19.

It localises to the cytoplasm. Its function is as follows. An accessory protein needed during the final step in the assembly of 30S ribosomal subunit, possibly for assembly of the head region. Essential for efficient processing of 16S rRNA. May be needed both before and after RbfA during the maturation of 16S rRNA. It has affinity for free ribosomal 30S subunits but not for 70S ribosomes. This is Ribosome maturation factor RimM from Bdellovibrio bacteriovorus (strain ATCC 15356 / DSM 50701 / NCIMB 9529 / HD100).